The sequence spans 190 residues: Protein GrpE (190 aa).

Polar residues predominate over residues 1–18; that stretch reads MTETPNTSSEEIQTSEPS. The interval 1–21 is disordered; the sequence is MTETPNTSSEEIQTSEPSPDN.

It belongs to the GrpE family. As to quaternary structure, homodimer.

It localises to the cytoplasm. In terms of biological role, participates actively in the response to hyperosmotic and heat shock by preventing the aggregation of stress-denatured proteins, in association with DnaK and GrpE. It is the nucleotide exchange factor for DnaK and may function as a thermosensor. Unfolded proteins bind initially to DnaJ; upon interaction with the DnaJ-bound protein, DnaK hydrolyzes its bound ATP, resulting in the formation of a stable complex. GrpE releases ADP from DnaK; ATP binding to DnaK triggers the release of the substrate protein, thus completing the reaction cycle. Several rounds of ATP-dependent interactions between DnaJ, DnaK and GrpE are required for fully efficient folding. This chain is Protein GrpE, found in Chlamydia trachomatis serovar L2 (strain ATCC VR-902B / DSM 19102 / 434/Bu).